Here is a 290-residue protein sequence, read N- to C-terminus: Ribosomal RNA small subunit methyltransferase A (290 aa).

His37, Val39, Gly64, Glu85, Asp115, and Asn132 together coordinate S-adenosyl-L-methionine.

It belongs to the class I-like SAM-binding methyltransferase superfamily. rRNA adenine N(6)-methyltransferase family. RsmA subfamily.

Its subcellular location is the cytoplasm. The enzyme catalyses adenosine(1518)/adenosine(1519) in 16S rRNA + 4 S-adenosyl-L-methionine = N(6)-dimethyladenosine(1518)/N(6)-dimethyladenosine(1519) in 16S rRNA + 4 S-adenosyl-L-homocysteine + 4 H(+). In terms of biological role, specifically dimethylates two adjacent adenosines (A1518 and A1519) in the loop of a conserved hairpin near the 3'-end of 16S rRNA in the 30S particle. May play a critical role in biogenesis of 30S subunits. The chain is Ribosomal RNA small subunit methyltransferase A from Acidothermus cellulolyticus (strain ATCC 43068 / DSM 8971 / 11B).